The following is a 251-amino-acid chain: Triosephosphate isomerase (251 aa).

9-11 (NWK) is a substrate binding site. The active-site Electrophile is the His95. Glu167 functions as the Proton acceptor in the catalytic mechanism. Substrate is bound by residues Gly173, Ser213, and 234 to 235 (GG). At Ser213 the chain carries Phosphoserine.

It belongs to the triosephosphate isomerase family. Homodimer.

It is found in the cytoplasm. It catalyses the reaction D-glyceraldehyde 3-phosphate = dihydroxyacetone phosphate. The protein operates within carbohydrate biosynthesis; gluconeogenesis. Its pathway is carbohydrate degradation; glycolysis; D-glyceraldehyde 3-phosphate from glycerone phosphate: step 1/1. Its function is as follows. Involved in the gluconeogenesis. Catalyzes stereospecifically the conversion of dihydroxyacetone phosphate (DHAP) to D-glyceraldehyde-3-phosphate (G3P). The chain is Triosephosphate isomerase from Shouchella clausii (strain KSM-K16) (Alkalihalobacillus clausii).